A 195-amino-acid chain; its full sequence is uncharacterized protein (195 aa).

Residues Met1 to Glu35 are disordered. Positions Gly20–Gln30 are enriched in low complexity. The MSP domain maps to Gly76 to Ala184.

This is an uncharacterized protein from Caenorhabditis elegans.